A 294-amino-acid polypeptide reads, in one-letter code: Eukaryotic translation initiation factor 3 subunit G (294 aa).

Disordered stretches follow at residues 1 to 43 and 160 to 211; these read MPSA…ENKI and EDDG…RDET. A compositionally biased stretch (basic and acidic residues) spans 194-211; it reads GANRRGETMPSRSQRDET. An RRM domain is found at 212–290; the sequence is ATIRVTNLSE…LILNVEWAKP (79 aa).

This sequence belongs to the eIF-3 subunit G family. In terms of assembly, component of the eukaryotic translation initiation factor 3 (eIF-3) complex.

Its subcellular location is the cytoplasm. In terms of biological role, RNA-binding component of the eukaryotic translation initiation factor 3 (eIF-3) complex, which is involved in protein synthesis of a specialized repertoire of mRNAs and, together with other initiation factors, stimulates binding of mRNA and methionyl-tRNAi to the 40S ribosome. The eIF-3 complex specifically targets and initiates translation of a subset of mRNAs involved in cell proliferation. This subunit can bind 18S rRNA. The sequence is that of Eukaryotic translation initiation factor 3 subunit G from Nematostella vectensis (Starlet sea anemone).